A 466-amino-acid chain; its full sequence is Glycosyl hydrolase family 109 protein (466 aa).

Residues 1-30 constitute a signal peptide (tat-type signal); it reads MENTRRSFLKKVSAAGIGAAGLAMAGNAGA. Residues 59-60, Asp81, 130-133, 151-152, and Asn180 contribute to the NAD(+) site; these read SR, WEWH, and EV. Tyr209 lines the substrate pocket. Residue 241 to 245 participates in NAD(+) binding; it reads AEAQW. Substrate contacts are provided by residues Arg246, 258-261, and Tyr340; that span reads YPTH. Tyr258 contacts NAD(+).

Belongs to the Gfo/Idh/MocA family. Glycosyl hydrolase 109 subfamily. NAD(+) is required as a cofactor. Post-translationally, predicted to be exported by the Tat system. The position of the signal peptide cleavage has not been experimentally proven.

Its function is as follows. Glycosidase. The protein is Glycosyl hydrolase family 109 protein of Parabacteroides distasonis (strain ATCC 8503 / DSM 20701 / CIP 104284 / JCM 5825 / NCTC 11152).